Reading from the N-terminus, the 228-residue chain is DNA mismatch repair protein MutH (228 aa).

This sequence belongs to the MutH family.

It is found in the cytoplasm. In terms of biological role, sequence-specific endonuclease that cleaves unmethylated GATC sequences. It is involved in DNA mismatch repair. The sequence is that of DNA mismatch repair protein MutH from Yersinia enterocolitica serotype O:8 / biotype 1B (strain NCTC 13174 / 8081).